The sequence spans 782 residues: Shutoff protein (782 aa).

Residues Val262–Cys329 form a binding to host EIF4G region. Positions Arg332 to Thr450 constitute an RRM domain. Phosphotyrosine; by host occurs at positions 349 and 665. The disordered stretch occupies residues Gly715–Gln760. The span at Arg728–Phe752 shows a compositional bias: gly residues.

The protein belongs to the adenoviridae shutoff protein family. In terms of assembly, monomer. Interacts with hexon protein; this interaction allows chaperoning and trimerization of hexon proteins. Interacts (via N-terminus) with host initiation factor EIF4G (via C-terminus). Interacts (via RRM domain) with viral mRNAs that contain the tripartite leader; this interaction allows ribosome shunting and expression of viral late mRNAs. Post-translationally, might be cleaved by the viral protease. Phosphorylated. Tyrosine phosphorylation enhances preferential binding to tripartite leader mRNAs and allows ribosome shunting. In terms of processing, methylated. Asymmetric dimethylation by host PRMT1 of the Arg/Gly-rich region may regulate shutoff protein binding to hexon and promote the capsid assembly in the nucleus.

It is found in the host cytoplasm. Its function is as follows. Protein that inhibits host translation while promoting late viral translation by ribosome shunting. Blocks host cap-dependent translation by binding to eIF4G, displacing MKNK1 from cap initiation complexes and preventing EIF4E phosphorylation. Binds to the tripartite leader sequence of viral late mRNAs and recruits host eIF4G, PABPC1/poly-A binding protein and 40S ribosomes subunits on viral mRNAs, allowing ribosome shunting and efficient translation of late viral mRNAs even though conventional translation via ribosome scanning from the cap has been shut off in the host cell. During assembly, acts as a chaperone protein that helps hexon proteins assembly into trimers. This is Shutoff protein from Human adenovirus A serotype 12 (HAdV-12).